The chain runs to 230 residues: Fibrillarin-like rRNA/tRNA 2'-O-methyltransferase (230 aa).

Residues 87 to 88, 105 to 106, 130 to 131, and 150 to 153 each bind S-adenosyl-L-methionine; these read TT, EF, DA, and DVAQ.

The protein belongs to the methyltransferase superfamily. Fibrillarin family. In terms of assembly, interacts with nop5. Component of box C/D small ribonucleoprotein (sRNP) particles that contain rpl7ae, FlpA and nop5, plus a guide RNA.

Its function is as follows. Involved in pre-rRNA and tRNA processing. Utilizes the methyl donor S-adenosyl-L-methionine to catalyze the site-specific 2'-hydroxyl methylation of ribose moieties in rRNA and tRNA. Site specificity is provided by a guide RNA that base pairs with the substrate. Methylation occurs at a characteristic distance from the sequence involved in base pairing with the guide RNA. This chain is Fibrillarin-like rRNA/tRNA 2'-O-methyltransferase, found in Methanococcus maripaludis (strain DSM 14266 / JCM 13030 / NBRC 101832 / S2 / LL).